Consider the following 157-residue polypeptide: Probable succinate transporter subunit YjjB (157 aa).

Transmembrane regions (helical) follow at residues Leu10–Val30, Ala55–Ile75, Ile87–Ile107, and Phe129–Trp149.

Belongs to the ThrE exporter (TC 2.A.79) family. The transporter is composed of YjjB and YjjP.

The protein resides in the cell inner membrane. Functionally, involved in succinate export with YjjP. Both proteins are required for export. Participates in succinate export, but also in the export of other dicarboxylates, such as fumarate and malate. Contributes to succinate production under both aerobic and anaerobic conditions, and increases fumarate and malate production during anaerobic succinate production. In Klebsiella aerogenes (strain ATCC 13048 / DSM 30053 / CCUG 1429 / JCM 1235 / KCTC 2190 / NBRC 13534 / NCIMB 10102 / NCTC 10006 / CDC 819-56) (Enterobacter aerogenes), this protein is Probable succinate transporter subunit YjjB.